A 319-amino-acid polypeptide reads, in one-letter code: N-acyl-aromatic-L-amino acid amidohydrolase (carboxylate-forming) (319 aa).

The hydrolytic domain stretch occupies residues 1 to 210; the sequence is MCSLPVPREP…TVLDFIELFN (210 aa). Positions 21 and 24 each coordinate Zn(2+). Substrate-binding positions include arginine 63 and 70 to 71; that span reads NR. Histidine 116 lines the Zn(2+) pocket. Substrate is bound by residues glutamate 178 and tyrosine 288. Residues 211–318 are shielding domain; the sequence is QGTAFPAFEM…PALTPAPSPA (108 aa).

The protein belongs to the AspA/AstE family. Aspartoacylase subfamily. In terms of assembly, exists as a mixture of homodimers and homotetramer, both catalytically active. (Microbial infection) Interacts with hepatitis C virus/HCV core protein. The cofactor is Zn(2+).

The protein resides in the apical cell membrane. It is found in the cytoplasm. It catalyses the reaction an N-acyl-aromatic L-alpha-amino acid + H2O = an aromatic L-alpha-amino acid + a carboxylate. The enzyme catalyses an N-acetyl-L-cysteine-S-conjugate + H2O = an S-substituted L-cysteine + acetate. In terms of biological role, plays an important role in deacetylating mercapturic acids in kidney proximal tubules. Also acts on N-acetyl-aromatic amino acids. The polypeptide is N-acyl-aromatic-L-amino acid amidohydrolase (carboxylate-forming) (ACY3) (Homo sapiens (Human)).